The sequence spans 431 residues: Ribosomal protein uS12 methylthiotransferase RimO (431 aa).

The MTTase N-terminal domain maps to 4 to 120; that stretch reads HKLFLLSLGC…ILAALGAAYH (117 aa). Positions 13, 49, 83, 144, 148, and 151 each coordinate [4Fe-4S] cluster. A Radical SAM core domain is found at 130–359; the sequence is LTPPHYTYLK…MELQESVSQD (230 aa). The TRAM domain maps to 362–429; that stretch reads RDFEGKEITV…PFDLVGEVIG (68 aa).

The protein belongs to the methylthiotransferase family. RimO subfamily. It depends on [4Fe-4S] cluster as a cofactor.

It is found in the cytoplasm. The enzyme catalyses L-aspartate(89)-[ribosomal protein uS12]-hydrogen + (sulfur carrier)-SH + AH2 + 2 S-adenosyl-L-methionine = 3-methylsulfanyl-L-aspartate(89)-[ribosomal protein uS12]-hydrogen + (sulfur carrier)-H + 5'-deoxyadenosine + L-methionine + A + S-adenosyl-L-homocysteine + 2 H(+). Functionally, catalyzes the methylthiolation of an aspartic acid residue of ribosomal protein uS12. The chain is Ribosomal protein uS12 methylthiotransferase RimO from Pelodictyon phaeoclathratiforme (strain DSM 5477 / BU-1).